Reading from the N-terminus, the 336-residue chain is Serpentine receptor class delta-51 (336 aa).

Helical transmembrane passes span 14–34 (VYYS…LFIM), 48–68 (YLFN…FAQC), 93–113 (CFVT…SILL), 133–153 (ATTF…QLLT), 188–208 (AAII…LIAF), 237–257 (GLLI…SYFL), and 275–295 (IFGS…VLPY).

The protein belongs to the nematode receptor-like protein srd family.

It localises to the membrane. In Caenorhabditis elegans, this protein is Serpentine receptor class delta-51 (srd-51).